The chain runs to 1346 residues: Zinc finger protein 541 (1346 aa).

Disordered regions lie at residues 1-34 (MDQY…DTLN) and 113-136 (EADE…SSPQ). Residues 21–32 (FSESQGLNCSDT) show a composition bias toward polar residues. 3 consecutive C2H2-type zinc fingers follow at residues 140–162 (LDCS…YLTH), 168–190 (HVCK…MLTH), and 196–220 (FVCI…YEVH). 4 disordered regions span residues 235 to 271 (ACGD…LLPH), 283 to 328 (VHQK…AAPA), 437 to 472 (SAVP…EDAL), and 578 to 744 (SQLP…GGYR). Low complexity-rich tracts occupy residues 294–323 (PAGA…PAGP) and 440–458 (PSRE…SPSE). The segment covering 671-685 (PDISSLAKQLRSSKG) has biased composition (polar residues). The C2H2-type 4 zinc-finger motif lies at 838–860 (FVCKNCSQMFYTEKGLSSHMCFH). A disordered region spans residues 931–971 (AMGQEKDGEERDSKESSQQRKRKKRPPPSTAGEPGPAGCHQ). Positions 934–948 (QEKDGEERDSKESSQ) are enriched in basic and acidic residues. The 93-residue stretch at 1053–1145 (PHINIGSRFQ…VALETLLLRG (93 aa)) folds into the ELM2 domain. The region spanning 1160-1211 (TGSDVWTPIEKRLFKKAFYAHKKDFYLIHKMIQTKTVAQCVEYYYIWKKMIK) is the SANT domain. Residues 1224 to 1281 (VKREPEEVERTEEKVPCSPRERPSHHPTPKLKTKSYRRESILSSSPNAGSKRTPELLG) are disordered. Over residues 1234–1247 (TEEKVPCSPRERPS) the composition is skewed to basic and acidic residues. The segment covering 1248-1258 (HHPTPKLKTKS) has biased composition (basic residues). A compositionally biased stretch (polar residues) spans 1264 to 1273 (ILSSSPNAGS). The segment at 1289 to 1311 (FPCRECERVFDKIKSRNAHMKRH) adopts a C2H2-type 5 zinc-finger fold.

As to quaternary structure, interacts with DNTTIP1. Identified in a complex with KCDT19, HDAC1 and HSPA2. Component of a histone deacetylase complex containing DNTTIP1, ZNF541, HDAC1 and HDAC2. Identified in a complex with HDAC1, HDAC2, DNTTIP1 and KCTD19.

Its subcellular location is the nucleus. In terms of biological role, transcription regulator which is essential for male fertility and for the completion of meiotic prophase in spermatocytes. Regulates progression of the pachytene stage of meiotic prophase by activating the expression of genes involved in meiosis during spermatogenesis. Maintains the repression of pre-pachytene transcriptional programs, including meiotic double-strand breaks (DSB) formation genes in pachytene spermatocytes and suppresses aberrant DSB formation after mid-pachytene, thus ensuring meiosis progression. The chain is Zinc finger protein 541 (ZNF541) from Homo sapiens (Human).